Here is a 138-residue protein sequence, read N- to C-terminus: MVGGGTVKKDLKKAIQYYVKACELNEMFGCLSLVSNSQINKQKLFQYLSKACELNSGNGCRFLGDFYENGKYVKKDLRKAAQYYSKACGLNDQDGCLILGYKQYAGKGVVKNEKQAVKTFEKACRLGSEDACGILNNY.

TPR repeat units lie at residues 1-28 (MVGG…NEMF), 57-94 (GNGC…NDQD), and 97-130 (LILG…GSED). 4 cysteine pairs are disulfide-bonded: cysteine 22/cysteine 30, cysteine 52/cysteine 60, cysteine 88/cysteine 96, and cysteine 124/cysteine 132.

The protein belongs to the hcp beta-lactamase family.

It carries out the reaction a beta-lactam + H2O = a substituted beta-amino acid. Hydrolyzes 6-aminopenicillinic acid and 7-aminocephalosporanic acid (ACA) derivatives. The protein is Beta-lactamase HcpB (hcpB) of Helicobacter pylori (strain ATCC 700392 / 26695) (Campylobacter pylori).